Consider the following 276-residue polypeptide: NH(3)-dependent NAD(+) synthetase (276 aa).

ATP is bound at residue 43–50 (GISGGVDS). Residue Asp-49 participates in Mg(2+) binding. Position 146 (Arg-146) interacts with deamido-NAD(+). ATP is bound at residue Thr-166. Glu-171 serves as a coordination point for Mg(2+). Residues Lys-179 and Asp-186 each coordinate deamido-NAD(+). ATP is bound by residues Lys-195 and Thr-217. A deamido-NAD(+)-binding site is contributed by 266–267 (HK).

The protein belongs to the NAD synthetase family. Homodimer.

It catalyses the reaction deamido-NAD(+) + NH4(+) + ATP = AMP + diphosphate + NAD(+) + H(+). It functions in the pathway cofactor biosynthesis; NAD(+) biosynthesis; NAD(+) from deamido-NAD(+) (ammonia route): step 1/1. Its function is as follows. Catalyzes the ATP-dependent amidation of deamido-NAD to form NAD. Uses ammonia as a nitrogen source. In Shewanella amazonensis (strain ATCC BAA-1098 / SB2B), this protein is NH(3)-dependent NAD(+) synthetase.